Here is a 253-residue protein sequence, read N- to C-terminus: Glucosamine-6-phosphate deaminase (253 aa).

D67 functions as the Proton acceptor; for enolization step in the catalytic mechanism. The active-site For ring-opening step is the N136. H138 (proton acceptor; for ring-opening step) is an active-site residue. Catalysis depends on E143, which acts as the For ring-opening step.

This sequence belongs to the glucosamine/galactosamine-6-phosphate isomerase family. NagB subfamily.

The enzyme catalyses alpha-D-glucosamine 6-phosphate + H2O = beta-D-fructose 6-phosphate + NH4(+). It functions in the pathway amino-sugar metabolism; N-acetylneuraminate degradation; D-fructose 6-phosphate from N-acetylneuraminate: step 5/5. Its function is as follows. Catalyzes the reversible isomerization-deamination of glucosamine 6-phosphate (GlcN6P) to form fructose 6-phosphate (Fru6P) and ammonium ion. This Thermoanaerobacter pseudethanolicus (strain ATCC 33223 / 39E) (Clostridium thermohydrosulfuricum) protein is Glucosamine-6-phosphate deaminase.